The chain runs to 448 residues: DNA repair protein RadA (448 aa).

The segment at 10–27 (CQHCGFTSPKWLGKCVQC) adopts a C4-type zinc-finger fold. Residue 96 to 103 (GSPGVGKS) participates in ATP binding. Residues 253–257 (KNRFG) carry the RadA KNRFG motif motif. The segment at 351–448 (DVFINVSGGI…NVVGKIVEWM (98 aa)) is lon-protease-like.

This sequence belongs to the RecA family. RadA subfamily.

In terms of biological role, DNA-dependent ATPase involved in processing of recombination intermediates, plays a role in repairing DNA breaks. Stimulates the branch migration of RecA-mediated strand transfer reactions, allowing the 3' invading strand to extend heteroduplex DNA faster. Binds ssDNA in the presence of ADP but not other nucleotides, has ATPase activity that is stimulated by ssDNA and various branched DNA structures, but inhibited by SSB. Does not have RecA's homology-searching function. This chain is DNA repair protein RadA, found in Helicobacter pylori (strain J99 / ATCC 700824) (Campylobacter pylori J99).